Here is a 93-residue protein sequence, read N- to C-terminus: Large ribosomal subunit protein uL23 (93 aa).

This sequence belongs to the universal ribosomal protein uL23 family. As to quaternary structure, part of the 50S ribosomal subunit. Contacts protein L29, and trigger factor when it is bound to the ribosome.

One of the early assembly proteins it binds 23S rRNA. One of the proteins that surrounds the polypeptide exit tunnel on the outside of the ribosome. Forms the main docking site for trigger factor binding to the ribosome. The chain is Large ribosomal subunit protein uL23 from Campylobacter lari (strain RM2100 / D67 / ATCC BAA-1060).